The primary structure comprises 326 residues: Malate dehydrogenase (326 aa).

An NAD(+)-binding site is contributed by 11-17 (GAAGQIG). Residues R92 and R98 each contribute to the substrate site. NAD(+) is bound by residues N105, Q112, and 129 to 131 (VGN). Residues N131 and R162 each contribute to the substrate site. H187 acts as the Proton acceptor in catalysis.

It belongs to the LDH/MDH superfamily. MDH type 2 family.

The catalysed reaction is (S)-malate + NAD(+) = oxaloacetate + NADH + H(+). Its function is as follows. Catalyzes the reversible oxidation of malate to oxaloacetate. This Halorhodospira halophila (strain DSM 244 / SL1) (Ectothiorhodospira halophila (strain DSM 244 / SL1)) protein is Malate dehydrogenase.